Reading from the N-terminus, the 295-residue chain is MADCCVRTCPRPMCIPPSYADLGKAARDIFNKGFGFGLVKLDVKTKSCSGVEFSTSGSSNTDTGKVSGTLETKYKWCEYGLTFTEKWNTDNTLGTEIAIEDQICQGLKLTFDTTFSPNTGKKSGKIKSAYKRECINLGCDVDFDFAGPAIHGSAVFGYEGWLAGYQMTFDSAKSKLTRSNFAVGYRTGDFQLHTNVNNGTEFGGSIYQKVCEDFDTSVNLAWTSGTNCTRFGIAAKYQLDPTASISAKVNNSSLIGVGYTQTLRPGVKLTLSALVDGKSFNAGGHKLGLALELEA.

ATP is bound by residues Lys-24 and Lys-32. N6-acetyllysine; alternate is present on Lys-32. Residue Lys-32 is modified to N6-succinyllysine; alternate. Lys-32 is covalently cross-linked (Glycyl lysine isopeptide (Lys-Gly) (interchain with G-Cter in ubiquitin); alternate). 2 beta stranded membrane passes run 38 to 47 (LVKLDVKTKS) and 51 to 59 (VEFSTSGSS). Residues Lys-65 and Lys-73 each participate in a glycyl lysine isopeptide (Lys-Gly) (interchain with G-Cter in ubiquitin) cross-link. A run of 4 beta stranded transmembrane segments spans residues 66–76 (VSGTLETKYKW), 81–88 (LTFTEKWN), 92–101 (TLGTEIAIED), and 107–116 (LKLTFDTTFS). Lys-121 is modified (N6-acetyllysine; alternate). Residue Lys-121 forms a Glycyl lysine isopeptide (Lys-Gly) (interchain with G-Cter in ubiquitin); alternate linkage. Residues Lys-122 and Lys-125 each participate in a glycyl lysine isopeptide (Lys-Gly) (interchain with G-Cter in ubiquitin) cross-link. The next 4 membrane-spanning stretches (beta stranded) occupy residues 123 to 132 (SGKIKSAYKR), 135 to 142 (INLGCDVD), 149 to 157 (AIHGSAVFG), and 162 to 170 (LAGYQMTFD). A Glycyl lysine isopeptide (Lys-Gly) (interchain with G-Cter in ubiquitin) cross-link involves residue Lys-173. The next 6 beta stranded transmembrane spans lie at 175 to 187 (KLTR…GYRT), 190 to 197 (FQLHTNVN), 201 to 210 (EFGGSIYQKV), 214 to 223 (FDTSVNLAWT), 230 to 239 (RFGIAAKYQL), and 243 to 250 (ASISAKVN). Residue Ser-205 is modified to Phosphoserine. Residue Ser-252 is modified to Phosphoserine. Residues 254-256 (LIG) and 272-276 (SALVD) contribute to the NAD(+) site. A run of 2 beta stranded transmembrane segments spans residues 254 to 263 (LIGVGYTQTL) and 266 to 275 (GVKLTLSALV). Position 278 is an N6-acetyllysine; alternate (Lys-278). Lys-278 participates in a covalent cross-link: Glycyl lysine isopeptide (Lys-Gly) (interchain with G-Cter in ubiquitin); alternate. The beta stranded transmembrane segment at 285–294 (HKLGLALELE) threads the bilayer. Residue Lys-286 forms a Glycyl lysine isopeptide (Lys-Gly) (interchain with G-Cter in ubiquitin) linkage.

Belongs to the eukaryotic mitochondrial porin family. As to quaternary structure, monomer, homodimer and higher order oligomers; formation of higher order structures is necessary for scramblase activity. Interacts with ARMC12 in a TBC1D21-dependent manner. Interacts with KLC3. Interacts with SPATA33. Interacts with PPP3CC in a SPATA33-dependent manner. Post-translationally, ubiquitinated by PRKN during mitophagy, leading to its degradation and enhancement of mitophagy. Deubiquitinated by USP30.

It is found in the mitochondrion outer membrane. The protein localises to the membrane. The enzyme catalyses chloride(in) = chloride(out). It catalyses the reaction K(+)(in) = K(+)(out). It carries out the reaction a 1,2-diacyl-sn-glycero-3-phospho-L-serine(in) = a 1,2-diacyl-sn-glycero-3-phospho-L-serine(out). The catalysed reaction is a 1,2-diacyl-sn-glycero-3-phosphocholine(in) = a 1,2-diacyl-sn-glycero-3-phosphocholine(out). The enzyme catalyses a 1,2-diacyl-sn-glycero-3-phospho-(1D-myo-inositol)(in) = a 1,2-diacyl-sn-glycero-3-phospho-(1D-myo-inositol)(out). In terms of biological role, non-selective voltage-gated ion channel that mediates the transport of anions and cations through the mitochondrion outer membrane and plasma membrane. The channel adopts an open conformation at zero mV and a closed conformation at both positive and negative potentials. There are two populations of channels; the main that functions in a lower open-state conductance with lower ion selectivity, that switch, in a voltage-dependent manner, from the open to a low-conducting 'closed' state and the other that has a normal ion selectivity in the typical high conductance, 'open' state. Binds various lipids, including the sphingolipid ceramide, the phospholipid phosphatidylcholine, and the sterols cholesterol and oxysterol. Binding of ceramide promotes the mitochondrial outer membrane permeabilization (MOMP) apoptotic pathway. Functionally, catalyzes the scrambling of phospholipids across the outer mitochondrial membrane; the mechanism is unrelated to channel activity and is capable of translocating both anionic and zwitterionic phospholipids. The sequence is that of Non-selective voltage-gated ion channel VDAC2 from Mesocricetus auratus (Golden hamster).